Here is a 147-residue protein sequence, read N- to C-terminus: Large ribosomal subunit protein uL11 (147 aa).

The protein belongs to the universal ribosomal protein uL11 family. In terms of assembly, part of the ribosomal stalk of the 50S ribosomal subunit. Interacts with L10 and the large rRNA to form the base of the stalk. L10 forms an elongated spine to which L12 dimers bind in a sequential fashion forming a multimeric L10(L12)X complex. One or more lysine residues are methylated.

Its function is as follows. Forms part of the ribosomal stalk which helps the ribosome interact with GTP-bound translation factors. This is Large ribosomal subunit protein uL11 from Cytophaga hutchinsonii (strain ATCC 33406 / DSM 1761 / CIP 103989 / NBRC 15051 / NCIMB 9469 / D465).